Reading from the N-terminus, the 413-residue chain is Inactive squalene synthase 2 (413 aa).

Gly-2 is subject to N-acetylglycine. A run of 2 helical transmembrane segments spans residues 283–303 (AIFQSCAIPQIVAIGTLALCY) and 390–410 (AIFVVMFVLLLAIVVVYLKAN).

Belongs to the phytoene/squalene synthase family. Mg(2+) serves as cofactor. Mn(2+) is required as a cofactor. In terms of tissue distribution, mostly expressed in hypocotyls, leaves and cotyledons, and, to a lower extent, in stems.

The protein localises to the endoplasmic reticulum membrane. The sequence is that of Inactive squalene synthase 2 from Arabidopsis thaliana (Mouse-ear cress).